We begin with the raw amino-acid sequence, 557 residues long: BZIP-type transcription factor MBZ1 (557 aa).

The segment covering 171-194 (AKAQAQQRQQQQQQQLIQQTQRQT) has biased composition (low complexity). 2 disordered regions span residues 171-209 (AKAQAQQRQQQQQQQLIQQTQRQTSPKSRGKAPQPTDPI) and 221-273 (MRAK…RQLR). Residues 229–240 (EPESQSVLNNLP) are compositionally biased toward polar residues. The span at 254 to 271 (RLLASEEGKKLSSKERRQ) shows a compositional bias: basic and acidic residues. A bZIP domain is found at 264–327 (LSSKERRQLR…KRLSDLTRML (64 aa)). The basic motif stretch occupies residues 267–286 (KERRQLRNKVSARAFRSRRK). The interval 289 to 296 (ISQLEAEI) is leucine-zipper. The tract at residues 344 to 364 (PTGLPQGSPVKIEQNPQQEQN) is disordered.

Its subcellular location is the nucleus. Its function is as follows. BZIP-type transcription factor that functions as either an activator or a suppressor, and which contributes to the regulation of fungal growth, conidiation, cell wall integrity, and virulence. Plays a key role in virulence against insects by mediating cell wall integrity, cell surface hydrophobicity, and adherence to hydrophobic surfaces. Exhibits negative regulation of subtilisin proteases, but positive control of an adhesin gene. The protein is BZIP-type transcription factor MBZ1 of Metarhizium robertsii (strain ARSEF 23 / ATCC MYA-3075) (Metarhizium anisopliae (strain ARSEF 23)).